Reading from the N-terminus, the 498-residue chain is ATP synthase subunit beta, chloroplastic (498 aa).

ATP is bound at residue 172-179; the sequence is GGAGVGKT.

This sequence belongs to the ATPase alpha/beta chains family. In terms of assembly, F-type ATPases have 2 components, CF(1) - the catalytic core - and CF(0) - the membrane proton channel. CF(1) has five subunits: alpha(3), beta(3), gamma(1), delta(1), epsilon(1). CF(0) has four main subunits: a(1), b(1), b'(1) and c(9-12).

The protein resides in the plastid. It localises to the chloroplast thylakoid membrane. It catalyses the reaction ATP + H2O + 4 H(+)(in) = ADP + phosphate + 5 H(+)(out). Functionally, produces ATP from ADP in the presence of a proton gradient across the membrane. The catalytic sites are hosted primarily by the beta subunits. This chain is ATP synthase subunit beta, chloroplastic, found in Lolium perenne (Perennial ryegrass).